A 56-amino-acid polypeptide reads, in one-letter code: PI-stichotoxin-Hcr2f (56 aa).

In terms of domain architecture, BPTI/Kunitz inhibitor spans 4-54; the sequence is CSEPKVVGPCKAGLRRFYYDSETGECKPFIYGGCKGNKNNFETLHACRGIC. 3 disulfides stabilise this stretch: Cys4–Cys54, Cys13–Cys37, and Cys29–Cys50.

The protein belongs to the venom Kunitz-type family. Sea anemone type 2 potassium channel toxin subfamily. Contains 3 disulfide bonds.

Its subcellular location is the secreted. It localises to the nematocyst. Functionally, dual-function toxin that inhibits both serine proteases and voltage-gated potassium channels. Has potent activity on both trypsin (Ki=28 nM) and chymotrypsin (Kd=1.8 nM). Shows inhibitory activity against 4 of the 7 potassium channels tested (rKv1.1/KCNA1; IC(50)=142.6 nM, hKv1.3/KCNA3; IC(50)=40.7 nM, rKv1.6/KCNA6; IC(50)=154.9 nM and drosophila Shaker; IC(50)=433.1 nM). Has an anti-inflammatory effect in LPS-activated macrophages in vitro, specifically reducing release of TNF and IL6 but not nitric oxide and reducing expression of IL1B precursor. In contrast to some paralogs, this protein decreases reactive oxygen species (ROS) level in the oxidative stress agent 6-hydroxydopamine (6-OHDA)-induced neurotoxicity model, but does not show cytoprotective activity on neuroblastoma cells. This protein also shows a weak free-radical scavenging activity. In vivo, when tested in a mice model of acute local inflammation, it reduces paw edema during 24 hours. In addition, it also reduces the synthesis of TNF in this model. The polypeptide is PI-stichotoxin-Hcr2f (Radianthus crispa (Leathery sea anemone)).